Here is a 333-residue protein sequence, read N- to C-terminus: GTPase Obg (333 aa).

The Obg domain maps to 1–159 (MKFIDEATIT…ATVRLELKLL (159 aa)). The tract at residues 63–85 (KQFAAPNGAPGEGRQKTGKSGDD) is disordered. Residues 75–84 (GRQKTGKSGD) are compositionally biased toward basic and acidic residues. The 170-residue stretch at 160–329 (ADVGLIGLPN…LKKHLFELLC (170 aa)) folds into the OBG-type G domain. Residues 166-173 (GLPNAGKS), 191-195 (FTTLS), 213-216 (DIPG), 283-286 (NKMD), and 310-312 (SAA) contribute to the GTP site. 2 residues coordinate Mg(2+): Ser173 and Thr193.

Belongs to the TRAFAC class OBG-HflX-like GTPase superfamily. OBG GTPase family. Monomer. Requires Mg(2+) as cofactor.

The protein localises to the cytoplasm. Functionally, an essential GTPase which binds GTP, GDP and possibly (p)ppGpp with moderate affinity, with high nucleotide exchange rates and a fairly low GTP hydrolysis rate. Plays a role in control of the cell cycle, stress response, ribosome biogenesis and in those bacteria that undergo differentiation, in morphogenesis control. This is GTPase Obg from Desulfosudis oleivorans (strain DSM 6200 / JCM 39069 / Hxd3) (Desulfococcus oleovorans).